The primary structure comprises 197 residues: HTH-type transcriptional repressor BdcR (197 aa).

Positions 15 to 75 (RFAPEQAISA…RVLNEYVGTE (61 aa)) constitute an HTH tetR-type domain. The H-T-H motif DNA-binding region spans 38–57 (SVAEVTDYLGINPPSLYAAF).

Its function is as follows. Negatively regulates expression of bdcA. This is HTH-type transcriptional repressor BdcR (bdcR) from Escherichia coli (strain K12).